A 352-amino-acid polypeptide reads, in one-letter code: Protein Wnt-2 (352 aa).

A signal peptide spans 1 to 23; that stretch reads MWKIHNKLLIYILWIMEIRLVSS. Intrachain disulfides connect Cys65–Cys76, Cys115–Cys123, Cys125–Cys148, Cys196–Cys210, Cys198–Cys205, Cys281–Cys312, Cys297–Cys307, Cys311–Cys351, Cys327–Cys342, Cys329–Cys339, and Cys334–Cys335. Residues Asn75 and Asn119 are each glycosylated (N-linked (GlcNAc...) asparagine). The O-palmitoleoyl serine; by PORCN moiety is linked to residue Ser202.

It belongs to the Wnt family. Post-translationally, palmitoleoylated by porcupine. The lipid group functions as a sorting signal, targeting the ligand to polarized vesicles that transport Wnt2 to unique sites at the cell surface. Depalmitoleoylated by notum, leading to inhibit Wnt signaling pathway. In terms of tissue distribution, dynamic expression pattern during embryogenesis. Expression is predominantly segmented, with expression also seen in the limb primordia and presumptive gonads. In embryonic tracheal cells, expression is close to and dorsal to the tracheal placode.

Its subcellular location is the secreted. It localises to the extracellular space. The protein localises to the extracellular matrix. Functionally, binds as a ligand to a family of frizzled seven-transmembrane receptors and acts through a cascade of genes on the nucleus. Segment polarity protein. May function in gonadogenesis and limb development. Wg and Wnt2 have a role in the developing trachea and together are responsible for all dorsal trunk formation. This Drosophila melanogaster (Fruit fly) protein is Protein Wnt-2 (Wnt2).